Reading from the N-terminus, the 427-residue chain is L-threonine dehydratase biosynthetic IlvA (427 aa).

Lys-63 is modified (N6-(pyridoxal phosphate)lysine). Residues Asn-90, 193–197 (GGGGC), and Ser-319 each bind pyridoxal 5'-phosphate. The ACT-like domain maps to 343–417 (HYFLVDFPQK…TEMHVETLQP (75 aa)).

The protein belongs to the serine/threonine dehydratase family. As to quaternary structure, homotetramer. Pyridoxal 5'-phosphate serves as cofactor.

It catalyses the reaction L-threonine = 2-oxobutanoate + NH4(+). It participates in amino-acid biosynthesis; L-isoleucine biosynthesis; 2-oxobutanoate from L-threonine: step 1/1. Catalyzes the anaerobic formation of alpha-ketobutyrate and ammonia from threonine in a two-step reaction. The first step involved a dehydration of threonine and a production of enamine intermediates (aminocrotonate), which tautomerizes to its imine form (iminobutyrate). Both intermediates are unstable and short-lived. The second step is the nonenzymatic hydrolysis of the enamine/imine intermediates to form 2-ketobutyrate and free ammonia. In the low water environment of the cell, the second step is accelerated by RidA. This is L-threonine dehydratase biosynthetic IlvA (ilvA) from Mycobacterium leprae (strain TN).